Reading from the N-terminus, the 151-residue chain is MGNGPPMERAVSSDDILTYYNTFIFFIYFNFTNENIYIIYTIYMKVQNTIVYIVLLLIVVVIIWNFTRKEGWSDYNAPNDFMKIYYSNIVEDKKLAEKYPFFGTGPFTGLRCRKPNNVGCNTTWVSGQLVELTPKLKEQIECKFGIQYVKT.

2 hydrophobic regions span residues 23–43 (FIFFIYFNFTNENIYIIYTIY) and 46–66 (VQNTIVYIVLLLIVVVIIWNF). Cysteine 112 and cysteine 120 form a disulfide bridge.

Interacts with the major capsid protein.

Its subcellular location is the virion. Its function is as follows. One of the minor capsid proteins that constitute a network internal to the major capsid proteins and outside the lipid membrane. The minor capsid protein P12 does not serve a cross-linking function between neighboring capsomers, it may play a role in the viral capsid assembly. The polypeptide is Minor capsid protein P12 (Paramecium bursaria Chlorella virus 1 (PBCV-1)).